The sequence spans 865 residues: DNA topoisomerase 3-beta (865 aa).

Residues 6-151 (RVLMVAEKPS…KVYRARFSSV (146 aa)) form the Toprim domain. Residues Glu12, Asp116, and Asp118 each coordinate Mg(2+). Residues 167-587 (NRDEALAVDA…HVIQQFRRKF (421 aa)) enclose the Topo IA-type catalytic domain. Residues 209-214 (SYGPCQ) form an interaction with DNA region. Tyr331 functions as the O-(5'-phospho-DNA)-tyrosine intermediate in the catalytic mechanism. Residues 833-853 (RRGGRGRGRGRGRGRGGRRGS) are compositionally biased toward basic residues. Residues 833 to 865 (RRGGRGRGRGRGRGRGGRRGSKSVDPKMSFRDF) form a disordered region. Positions 854 to 865 (KSVDPKMSFRDF) are enriched in basic and acidic residues.

This sequence belongs to the type IA topoisomerase family. The cofactor is Mg(2+).

The catalysed reaction is ATP-independent breakage of single-stranded DNA, followed by passage and rejoining.. Releases the supercoiling and torsional tension of DNA introduced during the DNA replication and transcription by transiently cleaving and rejoining one strand of the DNA duplex. Introduces a single-strand break via transesterification at a target site in duplex DNA. The scissile phosphodiester is attacked by the catalytic tyrosine of the enzyme, resulting in the formation of a DNA-(5'-phosphotyrosyl)-enzyme intermediate and the expulsion of a 3'-OH DNA strand. The free DNA strand than undergoes passage around the unbroken strand thus removing DNA supercoils. Finally, in the religation step, the DNA 3'-OH attacks the covalent intermediate to expel the active-site tyrosine and restore the DNA phosphodiester backbone. In Arabidopsis thaliana (Mouse-ear cress), this protein is DNA topoisomerase 3-beta.